A 116-amino-acid chain; its full sequence is Mitochondrial import inner membrane translocase subunit PAM16 like 2 (116 aa).

Residues 1 to 27 (MAGRLLANLIVMGSGIIGRAVFQAYRQ) constitute a mitochondrion transit peptide. Residues 57 to 106 (EARQILGVTEKTSWEEILQKYDKLFENNAKAGSFYLQSKVHRAKECLEVV) form a J-like region.

This sequence belongs to the TIM16/PAM16 family. As to expression, expressed constitutively and ubiquitously, except in root tips, at low levels.

The protein resides in the mitochondrion inner membrane. It is found in the cytoplasm. Functionally, regulates ATP-dependent protein translocation into the mitochondrial matrix. Involved in the uptake of thaxtomin, a phytotoxin produced by Streptomyces bacteria, that causes dramatic cell swelling, reduced seedling growth, and inhibition of cellulose synthesis. Modulates polar auxin transport. Involved in importing a negative regulator of plant immunity into mitochondria, thus protecting plants from over-accumulation of reactive oxygen species (ROS) and preventing autoimmunity. Confers sensitivity to virulent pathogens such as the oomycete H.arabidopsidis Noco2 and the bacteria P.syringae pv. maculicola ES4326. This chain is Mitochondrial import inner membrane translocase subunit PAM16 like 2, found in Arabidopsis thaliana (Mouse-ear cress).